A 662-amino-acid chain; its full sequence is PAN2-PAN3 deadenylation complex subunit PAN3 (662 aa).

Disordered stretches follow at residues 1 to 26 and 59 to 131; these read MASA…AREN and TTYQ…RAET. Residues 26–55 form a C3H1-type zinc finger; it reads NAKDTLCRNVTIYGRCRYEDKGCAFNHDPH. The segment covering 72-85 has biased composition (polar residues); that stretch reads DSPSFTPSLLSSNG. Low complexity predominate over residues 86–102; sequence SSPTTASVTAKKAATIS. The segment covering 114–126 has biased composition (polar residues); sequence RNITSRSNTSTPS. Positions 265–525 are pseudokinase domain; the sequence is QTLPNTQLPA…NIDIFITGIS (261 aa). Residues Arg317, 366–373, and 425–426 contribute to the ATP site; these read DYHPLSKT and SK. Residues 526–564 adopt a coiled-coil conformation; the sequence is SQLMSTFDSALHLDDELTSDLSRELENGRLVRLVTKLNF. Positions 565–662 are knob domain; sequence VNERPEYEHD…ALLKPTRRLH (98 aa).

Belongs to the protein kinase superfamily. PAN3 family. Homodimer. Forms a heterotrimer with a catalytic subunit pan2 to form the poly(A)-nuclease (PAN) deadenylation complex. Interacts (via PAM-2 motif) with poly(A)-binding protein pab1 (via PABC domain), conferring substrate specificity of the enzyme complex.

The protein resides in the cytoplasm. Regulatory subunit of the poly(A)-nuclease (PAN) deadenylation complex, one of two cytoplasmic mRNA deadenylases involved in mRNA turnover. PAN specifically shortens poly(A) tails of RNA and the activity is stimulated by poly(A)-binding protein pab1. PAN deadenylation is followed by rapid degradation of the shortened mRNA tails by the CCR4-NOT complex. Deadenylated mRNAs are then degraded by two alternative mechanisms, namely exosome-mediated 3'-5' exonucleolytic degradation, or deadenylation-dependent mRNA decaping and subsequent 5'-3' exonucleolytic degradation by xrn1. May also be involved in post-transcriptional maturation of mRNA poly(A) tails. pan3 acts as a positive regulator for PAN activity, recruiting the catalytic subunit pan2 to mRNA via its interaction with RNA and with pab1. This chain is PAN2-PAN3 deadenylation complex subunit PAN3, found in Aspergillus oryzae (strain ATCC 42149 / RIB 40) (Yellow koji mold).